The following is a 673-amino-acid chain: UvrABC system protein B (673 aa).

The region spanning 26-183 (EGLEDGLAHQ…RRLAELQYTR (158 aa)) is the Helicase ATP-binding domain. 39–46 (GVTGSGKT) is a binding site for ATP. Residues 92-115 (YYDYYQPEAYVPSSDTFIEKDASV) carry the Beta-hairpin motif. The Helicase C-terminal domain occupies 431 to 597 (QVDDLLSEIR…GLNKKVVDIL (167 aa)). In terms of domain architecture, UVR spans 633 to 668 (QQKIHELEGQMMQHAQNLEFEEAAQIRDQLHQLREL).

It belongs to the UvrB family. Forms a heterotetramer with UvrA during the search for lesions. Interacts with UvrC in an incision complex.

It localises to the cytoplasm. Functionally, the UvrABC repair system catalyzes the recognition and processing of DNA lesions. A damage recognition complex composed of 2 UvrA and 2 UvrB subunits scans DNA for abnormalities. Upon binding of the UvrA(2)B(2) complex to a putative damaged site, the DNA wraps around one UvrB monomer. DNA wrap is dependent on ATP binding by UvrB and probably causes local melting of the DNA helix, facilitating insertion of UvrB beta-hairpin between the DNA strands. Then UvrB probes one DNA strand for the presence of a lesion. If a lesion is found the UvrA subunits dissociate and the UvrB-DNA preincision complex is formed. This complex is subsequently bound by UvrC and the second UvrB is released. If no lesion is found, the DNA wraps around the other UvrB subunit that will check the other stand for damage. This chain is UvrABC system protein B, found in Klebsiella pneumoniae (strain 342).